The chain runs to 85 residues: Large ribosomal subunit protein bL27 (85 aa).

Positions 1–21 are disordered; it reads MAHKKGGGTTRNGRDSESKRL.

This sequence belongs to the bacterial ribosomal protein bL27 family.

This is Large ribosomal subunit protein bL27 from Janthinobacterium sp. (strain Marseille) (Minibacterium massiliensis).